Consider the following 292-residue polypeptide: WRKY transcription factor 55 (292 aa).

Residues 133 to 155 form a disordered region; it reads VERSGASGSSTPRQRRRKDEGEE. Positions 167-235 form a DNA-binding region, WRKY; the sequence is NTDLPPDDNH…YRGSHTCYNS (69 aa).

Belongs to the WRKY group III family.

The protein localises to the nucleus. Transcription factor. Interacts specifically with the W box (5'-(T)TGAC[CT]-3'), a frequently occurring elicitor-responsive cis-acting element. The sequence is that of WRKY transcription factor 55 (WRKY55) from Arabidopsis thaliana (Mouse-ear cress).